The following is a 104-amino-acid chain: L-rhamnose mutarotase (104 aa).

Tyr18 lines the substrate pocket. His22 functions as the Proton donor in the catalytic mechanism. Substrate contacts are provided by residues Tyr41 and 76–77 (WW).

The protein belongs to the rhamnose mutarotase family. Homodimer.

The protein resides in the cytoplasm. The catalysed reaction is alpha-L-rhamnose = beta-L-rhamnose. It participates in carbohydrate metabolism; L-rhamnose metabolism. Functionally, involved in the anomeric conversion of L-rhamnose. This Shigella dysenteriae serotype 1 (strain Sd197) protein is L-rhamnose mutarotase.